The following is a 309-amino-acid chain: Protein FdhE (309 aa).

Belongs to the FdhE family.

The protein localises to the cytoplasm. Functionally, necessary for formate dehydrogenase activity. In Escherichia coli O45:K1 (strain S88 / ExPEC), this protein is Protein FdhE.